The primary structure comprises 215 residues: 3-demethoxyubiquinol 3-hydroxylase (215 aa).

Fe cation contacts are provided by Glu64, Glu94, His97, Glu146, Glu178, and His181.

This sequence belongs to the COQ7 family. The cofactor is Fe cation.

It localises to the cell membrane. The enzyme catalyses a 5-methoxy-2-methyl-3-(all-trans-polyprenyl)benzene-1,4-diol + AH2 + O2 = a 3-demethylubiquinol + A + H2O. The protein operates within cofactor biosynthesis; ubiquinone biosynthesis. Catalyzes the hydroxylation of 2-nonaprenyl-3-methyl-6-methoxy-1,4-benzoquinol during ubiquinone biosynthesis. In Ectopseudomonas mendocina (strain ymp) (Pseudomonas mendocina), this protein is 3-demethoxyubiquinol 3-hydroxylase.